The following is a 487-amino-acid chain: Inosine-5'-monophosphate dehydrogenase (487 aa).

CBS domains follow at residues 93 to 152 (VVTE…VTAV) and 153 to 214 (MTPK…CKDE). Residues Asp248, 248 to 250 (DSS), and 298 to 300 (GIG) each bind NAD(+). K(+) contacts are provided by Gly300 and Gly302. Ser303 is a binding site for IMP. Cys305 is a binding site for K(+). The Thioimidate intermediate role is filled by Cys305. IMP is bound by residues 338 to 340 (DGG), 361 to 362 (GS), and 385 to 389 (YRGMG). The active-site Proton acceptor is the Arg401. Glu415 contributes to the IMP binding site. Glu469, Ser470, and His471 together coordinate K(+).

This sequence belongs to the IMPDH/GMPR family. As to quaternary structure, homotetramer. K(+) is required as a cofactor.

The catalysed reaction is IMP + NAD(+) + H2O = XMP + NADH + H(+). The protein operates within purine metabolism; XMP biosynthesis via de novo pathway; XMP from IMP: step 1/1. With respect to regulation, mycophenolic acid (MPA) is a non-competitive inhibitor that prevents formation of the closed enzyme conformation by binding to the same site as the amobile flap. In contrast, mizoribine monophosphate (MZP) is a competitive inhibitor that induces the closed conformation. MPA is a potent inhibitor of mammalian IMPDHs but a poor inhibitor of the bacterial enzymes. MZP is a more potent inhibitor of bacterial IMPDH. Its function is as follows. Catalyzes the conversion of inosine 5'-phosphate (IMP) to xanthosine 5'-phosphate (XMP), the first committed and rate-limiting step in the de novo synthesis of guanine nucleotides, and therefore plays an important role in the regulation of cell growth. This is Inosine-5'-monophosphate dehydrogenase from Yersinia pestis.